The chain runs to 343 residues: LRP2-binding protein (343 aa).

Residues 58–91 (SQATFLLGQLHYVQGCYAEAELIFDRIKDKDPQA) form a TPR repeat. 6 Sel1-like repeats span residues 92-124 (LYQL…FWDS), 132-167 (YAAL…DNGN), 172-205 (VKAQ…GNGS), 206-241 (LESQ…ERGS), 242-273 (VYAQ…EYKD), and 293-328 (AIGM…RIDP).

It localises to the cytoplasm. Its function is as follows. May act as an adapter that regulates LRP2 function. The chain is LRP2-binding protein (lrp2bp) from Danio rerio (Zebrafish).